The chain runs to 363 residues: Chorismate synthase (363 aa).

NADP(+)-binding residues include Arg48 and Arg54. Residues 125 to 127 (RSS), 237 to 238 (NA), Gly277, 292 to 296 (KPTSS), and Arg318 each bind FMN.

The protein belongs to the chorismate synthase family. Homotetramer. The cofactor is FMNH2.

It catalyses the reaction 5-O-(1-carboxyvinyl)-3-phosphoshikimate = chorismate + phosphate. Its pathway is metabolic intermediate biosynthesis; chorismate biosynthesis; chorismate from D-erythrose 4-phosphate and phosphoenolpyruvate: step 7/7. Functionally, catalyzes the anti-1,4-elimination of the C-3 phosphate and the C-6 proR hydrogen from 5-enolpyruvylshikimate-3-phosphate (EPSP) to yield chorismate, which is the branch point compound that serves as the starting substrate for the three terminal pathways of aromatic amino acid biosynthesis. This reaction introduces a second double bond into the aromatic ring system. In Stutzerimonas stutzeri (strain A1501) (Pseudomonas stutzeri), this protein is Chorismate synthase.